The sequence spans 883 residues: Phosphoenolpyruvate carboxylase (883 aa).

Active-site residues include histidine 138 and lysine 546.

It belongs to the PEPCase type 1 family. Homotetramer. Mg(2+) is required as a cofactor.

The catalysed reaction is oxaloacetate + phosphate = phosphoenolpyruvate + hydrogencarbonate. The enzyme has distinct binding sites for each of the allosteric effectors such as acetyl-CoA, fructose 1,6-bisphosphate, guanosine 3'-diphosphate 5'-diphosphate, long chain fatty acids, and L-aspartate. Functionally, forms oxaloacetate, a four-carbon dicarboxylic acid source for the tricarboxylic acid cycle. This chain is Phosphoenolpyruvate carboxylase (ppc), found in Salmonella typhi.